Here is a 176-residue protein sequence, read N- to C-terminus: Small ribosomal subunit protein uS5 (176 aa).

Residues 11–74 (LSEVLVDVNR…QAAKKKMMKV (64 aa)) enclose the S5 DRBM domain.

This sequence belongs to the universal ribosomal protein uS5 family. In terms of assembly, part of the 30S ribosomal subunit. Contacts proteins S4 and S8.

With S4 and S12 plays an important role in translational accuracy. Functionally, located at the back of the 30S subunit body where it stabilizes the conformation of the head with respect to the body. This is Small ribosomal subunit protein uS5 from Rickettsia bellii (strain RML369-C).